The sequence spans 210 residues: UPF0301 protein M446_6268 (210 aa).

Belongs to the UPF0301 (AlgH) family.

This is UPF0301 protein M446_6268 from Methylobacterium sp. (strain 4-46).